Consider the following 512-residue polypeptide: GMP synthase [glutamine-hydrolyzing] (512 aa).

A Glutamine amidotransferase type-1 domain is found at 7 to 197 (TIIVLDFGSQ…VFGVCGCSEG (191 aa)). Cysteine 84 serves as the catalytic Nucleophile. Residues histidine 171 and glutamate 173 contribute to the active site. The region spanning 198 to 387 (WNMENFIEVE…LGIPDEIVWR (190 aa)) is the GMPS ATP-PPase domain. ATP is bound at residue 225–231 (SGGVDSS).

Homodimer.

The enzyme catalyses XMP + L-glutamine + ATP + H2O = GMP + L-glutamate + AMP + diphosphate + 2 H(+). It participates in purine metabolism; GMP biosynthesis; GMP from XMP (L-Gln route): step 1/1. In terms of biological role, catalyzes the synthesis of GMP from XMP. The chain is GMP synthase [glutamine-hydrolyzing] from Bacillus cytotoxicus (strain DSM 22905 / CIP 110041 / 391-98 / NVH 391-98).